Here is a 241-residue protein sequence, read N- to C-terminus: MASSSSSSYRFQSGSYPLSSSPSLGNFVERIKDACHFLVSAVLGTIISAILTFFFALVGTLLGALTGALIGQETESGFIRGAAIGAISGAVFSIEVFESSLDLWKSDESGFGCFLYLIDVIVSLLSGRLVRERIGPAMLSAVQSQMGAVDTAFDDHTSLFDTGGSKGLTGDLVEKIPKMTITGNNNTDASENTDSCSVCLQDFQLGETVRSLPHCHHMFHLPCIDNWLLRHGSCPMCRRDI.

The interval 1-20 is disordered; the sequence is MASSSSSSYRFQSGSYPLSS. Residues 1–36 lie on the Lumenal, thylakoid side of the membrane; it reads MASSSSSSYRFQSGSYPLSSSPSLGNFVERIKDACH. The helical transmembrane segment at 37–57 threads the bilayer; it reads FLVSAVLGTIISAILTFFFAL. The Stromal portion of the chain corresponds to 58 to 76; sequence VGTLLGALTGALIGQETES. Residues 77-97 form a helical membrane-spanning segment; it reads GFIRGAAIGAISGAVFSIEVF. Residues 98–109 are Lumenal, thylakoid-facing; it reads ESSLDLWKSDES. A helical transmembrane segment spans residues 110-130; sequence GFGCFLYLIDVIVSLLSGRLV. The Stromal segment spans residues 131–241; it reads RERIGPAMLS…GSCPMCRRDI (111 aa). The RING-type; atypical zinc finger occupies 196-238; sequence CSVCLQDFQLGETVRSLPHCHHMFHLPCIDNWLLRHGSCPMCR.

This sequence belongs to the RING-type zinc finger family. NIP subfamily. In terms of assembly, interacts with RPOT2.

Its subcellular location is the plastid. It localises to the chloroplast thylakoid membrane. In terms of biological role, intrinsic thylakoid membrane protein that fixes RPOT2 on the stromal side of the thylakoid membrane. In Arabidopsis thaliana (Mouse-ear cress), this protein is NEP1-interacting protein 2 (NIP2).